Here is a 314-residue protein sequence, read N- to C-terminus: DNA-directed RNA polymerase subunit alpha (314 aa).

The interval 1–228 (MIEIEKPRIE…EHLNIFVGLT (228 aa)) is alpha N-terminal domain (alpha-NTD). The segment at 246–314 (EKVLEMSIEE…DLGLGLRKED (69 aa)) is alpha C-terminal domain (alpha-CTD).

Belongs to the RNA polymerase alpha chain family. Homodimer. The RNAP catalytic core consists of 2 alpha, 1 beta, 1 beta' and 1 omega subunit. When a sigma factor is associated with the core the holoenzyme is formed, which can initiate transcription.

The catalysed reaction is RNA(n) + a ribonucleoside 5'-triphosphate = RNA(n+1) + diphosphate. Its function is as follows. DNA-dependent RNA polymerase catalyzes the transcription of DNA into RNA using the four ribonucleoside triphosphates as substrates. This chain is DNA-directed RNA polymerase subunit alpha, found in Staphylococcus aureus (strain Mu3 / ATCC 700698).